The sequence spans 317 residues: Aspartate carbamoyltransferase catalytic subunit (317 aa).

Residues arginine 66 and threonine 67 each coordinate carbamoyl phosphate. L-aspartate is bound at residue lysine 94. Carbamoyl phosphate is bound by residues arginine 116, histidine 144, and glutamine 147. Residues arginine 177 and arginine 231 each contribute to the L-aspartate site. Carbamoyl phosphate-binding residues include glycine 272 and proline 273.

Belongs to the aspartate/ornithine carbamoyltransferase superfamily. ATCase family. In terms of assembly, heterododecamer (2C3:3R2) of six catalytic PyrB chains organized as two trimers (C3), and six regulatory PyrI chains organized as three dimers (R2).

The enzyme catalyses carbamoyl phosphate + L-aspartate = N-carbamoyl-L-aspartate + phosphate + H(+). It participates in pyrimidine metabolism; UMP biosynthesis via de novo pathway; (S)-dihydroorotate from bicarbonate: step 2/3. Catalyzes the condensation of carbamoyl phosphate and aspartate to form carbamoyl aspartate and inorganic phosphate, the committed step in the de novo pyrimidine nucleotide biosynthesis pathway. This is Aspartate carbamoyltransferase catalytic subunit from Rhodopseudomonas palustris (strain BisB18).